The following is a 357-amino-acid chain: Probable butyrate kinase 1 (357 aa).

This sequence belongs to the acetokinase family.

The protein localises to the cytoplasm. It carries out the reaction butanoate + ATP = butanoyl phosphate + ADP. This Caldanaerobacter subterraneus subsp. tengcongensis (strain DSM 15242 / JCM 11007 / NBRC 100824 / MB4) (Thermoanaerobacter tengcongensis) protein is Probable butyrate kinase 1.